The sequence spans 256 residues: Stanniocalcin (256 aa).

An N-terminal signal peptide occupies residues 1–18 (MLAKFGLCAVFLVLGTAA). Positions 19 to 33 (TFDTDPEEASPRRAR) are excised as a propeptide. An N-linked (GlcNAc...) asparagine glycan is attached at N62.

This sequence belongs to the stanniocalcin family. As to quaternary structure, homodimer; disulfide-linked. In terms of tissue distribution, produced and secreted by the corpuscles of Stannius.

It localises to the secreted. In terms of biological role, its primary function is the prevention of hypercalcemia. Upon release into the circulation, it lowers calcium transport by the gills, thereby reducing its rate of influx from the environment into the extracellular compartment. STC also stimulates phosphate reabsorption by renal proximal tubules. The consequence of this action is increased levels of plasma phosphate, which combines with excess calcium and promotes its disposal into bone and scales. This is Stanniocalcin (stc) from Oncorhynchus kisutch (Coho salmon).